The sequence spans 496 residues: MFS transporter cpaT (496 aa).

A disordered region spans residues 1-45; it reads MGHQEEPPRICKTPSGHEQGEGPAEKTSKPSTEEVGWDGPTDPAR. The segment covering 18–32 has biased composition (basic and acidic residues); that stretch reads EQGEGPAEKTSKPST. N-linked (GlcNAc...) asparagine glycosylation is present at Asn48. Residues 58-78 traverse the membrane as a helical segment; the sequence is MGIISYLTFLTPLTSSIVAPA. N-linked (GlcNAc...) asparagine glycosylation is present at Asn90. A run of 5 helical transmembrane segments spans residues 93–113, 130–150, 154–174, 180–200, and 212–232; these read LASF…LFLA, FIFT…ALLV, FAGI…ADMF, GVAM…GPIA, and WVFW…LFVL. Asn252 carries N-linked (GlcNAc...) asparagine glycosylation. 6 helical membrane-spanning segments follow: residues 288-308, 325-345, 367-387, 395-415, 427-449, and 463-483; these read VALF…LFTT, GLVY…FGAL, LPPL…YGWS, IMPI…LLPI, AASA…PLAG, and SLLG…YFYG.

The protein belongs to the major facilitator superfamily.

Its subcellular location is the membrane. Its function is as follows. MFS transporter; part of the gene cluster that mediates the biosynthesis of the fungal neurotoxin cyclopiazonic acid (CPA), a nanomolar inhibitor of Ca(2+)-ATPase with a unique pentacyclic indole tetramic acid scaffold. In Aspergillus oryzae (Yellow koji mold), this protein is MFS transporter cpaT.